A 474-amino-acid polypeptide reads, in one-letter code: tRNA-2-methylthio-N(6)-dimethylallyladenosine synthase (474 aa).

Residues 3–120 form the MTTase N-terminal domain; the sequence is KKLHIKTWGC…LPEMIDQVQR (118 aa). 6 residues coordinate [4Fe-4S] cluster: Cys12, Cys49, Cys83, Cys157, Cys161, and Cys164. The Radical SAM core domain occupies 143-375; it reads RADGPTAFVS…QDRITQQAMR (233 aa). The 64-residue stretch at 378-441 folds into the TRAM domain; that stretch reads RQMLGTVQRI…TNSLRGIFIR (64 aa).

This sequence belongs to the methylthiotransferase family. MiaB subfamily. In terms of assembly, monomer. [4Fe-4S] cluster is required as a cofactor.

It localises to the cytoplasm. It catalyses the reaction N(6)-dimethylallyladenosine(37) in tRNA + (sulfur carrier)-SH + AH2 + 2 S-adenosyl-L-methionine = 2-methylsulfanyl-N(6)-dimethylallyladenosine(37) in tRNA + (sulfur carrier)-H + 5'-deoxyadenosine + L-methionine + A + S-adenosyl-L-homocysteine + 2 H(+). Catalyzes the methylthiolation of N6-(dimethylallyl)adenosine (i(6)A), leading to the formation of 2-methylthio-N6-(dimethylallyl)adenosine (ms(2)i(6)A) at position 37 in tRNAs that read codons beginning with uridine. This chain is tRNA-2-methylthio-N(6)-dimethylallyladenosine synthase, found in Shewanella denitrificans (strain OS217 / ATCC BAA-1090 / DSM 15013).